A 226-amino-acid polypeptide reads, in one-letter code: Probable C4-dicarboxylate response regulator DctR (226 aa).

In terms of domain architecture, Response regulatory spans Lys-7–Lys-123. Position 58 is a 4-aspartylphosphate (Asp-58). Positions Ala-179 to Asp-198 form a DNA-binding region, H-T-H motif.

Post-translationally, phosphorylated by DctS.

It is found in the cytoplasm. Member of the two-component regulatory system DctS/DctR. Essential for expression of dctP. In Bacillus subtilis (strain 168), this protein is Probable C4-dicarboxylate response regulator DctR (dctR).